Consider the following 396-residue polypeptide: Acetate kinase (396 aa).

N8 serves as a coordination point for Mg(2+). K15 lines the ATP pocket. Residue R90 participates in substrate binding. D147 (proton donor/acceptor) is an active-site residue. Residues 207–211 (HLGSG), 283–285 (DMR), and 330–334 (GIGEN) contribute to the ATP site. E384 is a Mg(2+) binding site.

This sequence belongs to the acetokinase family. In terms of assembly, homodimer. The cofactor is Mg(2+). Mn(2+) is required as a cofactor.

The protein resides in the cytoplasm. The catalysed reaction is acetate + ATP = acetyl phosphate + ADP. Its pathway is metabolic intermediate biosynthesis; acetyl-CoA biosynthesis; acetyl-CoA from acetate: step 1/2. In terms of biological role, catalyzes the formation of acetyl phosphate from acetate and ATP. Can also catalyze the reverse reaction. In Lacticaseibacillus paracasei (strain ATCC 334 / BCRC 17002 / CCUG 31169 / CIP 107868 / KCTC 3260 / NRRL B-441) (Lactobacillus paracasei), this protein is Acetate kinase.